The chain runs to 155 residues: Small ribosomal subunit protein uS7cz/uS7cy (155 aa).

This sequence belongs to the universal ribosomal protein uS7 family. In terms of assembly, part of the 30S ribosomal subunit.

Its subcellular location is the plastid. The protein resides in the chloroplast. Its function is as follows. One of the primary rRNA binding proteins, it binds directly to 16S rRNA where it nucleates assembly of the head domain of the 30S subunit. The sequence is that of Small ribosomal subunit protein uS7cz/uS7cy (rps7-A) from Anthoceros angustus (Hornwort).